The sequence spans 364 residues: Probable tartrate dehydrogenase/decarboxylase TtuC (364 aa).

Residues Asp222, Asp246, and Asp250 each coordinate Mn(2+).

This sequence belongs to the isocitrate and isopropylmalate dehydrogenases family. The cofactor is Mg(2+). Mn(2+) serves as cofactor. It depends on K(+) as a cofactor.

It is found in the cytoplasm. It catalyses the reaction tartrate + NAD(+) = 2-hydroxy-3-oxosuccinate + NADH + H(+). It carries out the reaction (2R,3S)-tartrate + NAD(+) = 2-hydroxy-3-oxosuccinate + NADH + H(+). The catalysed reaction is (2R,3R)-tartrate + NAD(+) = 2-hydroxy-3-oxosuccinate + NADH + H(+). The enzyme catalyses (2R,3R)-tartrate + H(+) = (R)-glycerate + CO2. It catalyses the reaction (R)-malate + NAD(+) = pyruvate + CO2 + NADH. Its pathway is carbohydrate acid metabolism; tartrate degradation; 2-hydroxy-3-oxosuccinate from L-tartrate: step 1/1. It functions in the pathway carbohydrate acid metabolism; tartrate degradation; 2-hydroxy-3-oxosuccinate from meso-tartrate: step 1/1. It participates in carbohydrate acid metabolism; tartrate degradation; D-glycerate from L-tartrate: step 1/1. Its function is as follows. Has multiple catalytic activities. Apart from catalyzing the oxidation of (+)-tartrate to oxaloglycolate, also converts meso-tartrate to D-glycerate and catalyzes the oxidative decarboxylation of D-malate to pyruvate. In Agrobacterium vitis (Rhizobium vitis), this protein is Probable tartrate dehydrogenase/decarboxylase TtuC (ttuC).